The sequence spans 715 residues: Scinderin (715 aa).

The interval 1–363 (MAQGLYHEEF…DGFGKVYVTE (363 aa)) is actin-severing. A Gelsolin-like 1 repeat occupies 27–77 (LELVPVPESAYGNFYVGDAYLVLHTTQASRGFTYRLHFWLGKECTQDESTA). Tyr102 carries the phosphotyrosine modification. A 1,2-diacyl-sn-glycero-3-phospho-(1D-myo-inositol-4,5-bisphosphate)-binding positions include 112-119 (KGGLKYKA) and 138-146 (RLLHVKGRR). Gelsolin-like repeat units follow at residues 148-188 (VRAT…YERL), 265-307 (LVAE…QERK), 398-451 (VQIW…DELT), and 523-564 (TRIM…EEEK). The interval 364–715 (KVAHVKQIPF…WFLGWDSSRW (352 aa)) is actin-binding, Ca-sensitive. Positions 364-715 (KVAHVKQIPF…WFLGWDSSRW (352 aa)) are ca(2+)-dependent actin binding. Ca(2+) contacts are provided by Asn538, Asp539, and Glu562. Tyr599 is modified (phosphotyrosine). The stretch at 626–668 (FIIEEVPGEFTQDDLAEDDVMLLDAWEQIFIWIGKDANEVEKS) is one Gelsolin-like 6 repeat. Positions 643, 644, and 666 each coordinate Ca(2+).

This sequence belongs to the villin/gelsolin family. The N-terminus is blocked. As to expression, in the adrenal gland, expressed in the medulla but, in the cortex, found only in diffuse parts.

It is found in the cytoplasm. Its subcellular location is the cytoskeleton. The protein localises to the cell projection. The protein resides in the podosome. Functionally, ca(2+)-dependent actin filament-severing protein that has a regulatory function in exocytosis by affecting the organization of the microfilament network underneath the plasma membrane. In vitro, also has barbed end capping and nucleating activities in the presence of Ca(2+). Severing activity is inhibited by phosphatidylinositol 4,5-bis-phosphate (PIP2). Required for megakaryocyte differentiation, maturation, polyploidization and apoptosis with the release of platelet-like particles. Plays a role in osteoclastogenesis (OCG) and actin cytoskeletal organization in osteoclasts. Regulates chondrocyte proliferation and differentiation. Inhibits cell proliferation and tumorigenesis. Signaling is mediated by MAPK, p38 and JNK pathways. The protein is Scinderin of Bos taurus (Bovine).